The sequence spans 711 residues: Choline transporter-like protein 2 (711 aa).

Topologically, residues 1–33 (MGDERPHYYGKHGTPQKYDPTFKGPIYNRGCTD) are cytoplasmic. Phosphothreonine is present on Thr-14. The chain crosses the membrane as a helical span at residues 34-54 (VICCVFLLVAIVGYVAVGIIA). Over 55-232 (WTHGDPRKVI…RIFEDYTVSW (178 aa)) the chain is Extracellular. Residues Asn-187 and Asn-200 are each glycosylated (N-linked (GlcNAc...) asparagine). Residues 233–253 (YWIIIGLVIAMAMSLLFIILL) traverse the membrane as a helical segment. At 254 to 256 (RFL) the chain is on the cytoplasmic side. A helical transmembrane segment spans residues 257–277 (AGIMVWVMIIMVILVLGYGIF). Residues 278-315 (HCYMEYSRLRGEAGSDVSLVDLGFQTDFRVYLHLRQTW) lie on the Extracellular side of the membrane. Residues 316–336 (LAFMIILSILEVIIILLLIFL) traverse the membrane as a helical segment. The Cytoplasmic portion of the chain corresponds to 337-364 (RKRILIAIALIKEASRAVGYVMCTMLYP). The chain crosses the membrane as a helical span at residues 365–385 (LVTFFLLCLCIAYWASTAVFL). Topologically, residues 386-440 (STSNEAVYKIFDDGLCPFTAKTCNPETFPSSNESRQCPNARCQFAFYGGESGYHR) are extracellular. N-linked (GlcNAc...) asparagine glycosylation occurs at Asn-417. A helical membrane pass occupies residues 441-461 (ALLGLQIFNAFMFFWLANFVL). Residues 462-504 (ALGQVTLAGAFASYYWALRKPDDLPAFPLFSAFGRALRYHTGS) lie on the Cytoplasmic side of the membrane. A helical transmembrane segment spans residues 505–525 (LAFGALILAIVQIIRVILEYL). Residues 526–563 (DQRLKAAENKFAKCLMTCLKCCFWCLEKFIKFLNRNAY) are Extracellular-facing. A helical transmembrane segment spans residues 564 to 584 (IMIAIYGTNFCTSARNAFFLL). Over 585-599 (MRNIIRVAVLDKVTD) the chain is Cytoplasmic. Residues 600–620 (FLFLLGKLLIVGSVGILAFFF) traverse the membrane as a helical segment. Topologically, residues 621 to 638 (FTHRIRIVQDTAPPLNYY) are extracellular. A helical transmembrane segment spans residues 639–659 (WVPILTVIVGSYLIAHGFFSV). The Cytoplasmic segment spans residues 660–711 (YGMCVDTLFLCFCEDLERNDGSQERPYFMSPELRDILLKGSAEEGKRAEAEE).

This sequence belongs to the CTL (choline transporter-like) family. Interacts with COCH. N-glycosylated.

The protein localises to the cell membrane. It is found in the mitochondrion outer membrane. It carries out the reaction choline(out) + n H(+)(in) = choline(in) + n H(+)(out). The catalysed reaction is ethanolamine(out) + n H(+)(in) = ethanolamine(in) + n H(+)(out). Its function is as follows. Choline/H+ antiporter, mainly in mitochodria. Also acts as a low-affinity ethanolamine/H+ antiporter, regulating the supply of extracellular ethanolamine (Etn) for the CDP-Etn pathway, redistribute intracellular Etn and balance the CDP-Cho and CDP-Etn arms of the Kennedy pathway. The polypeptide is Choline transporter-like protein 2 (SLC44A2) (Pongo abelii (Sumatran orangutan)).